Consider the following 371-residue polypeptide: Glycosyltransferase 8 domain-containing protein 1 (371 aa).

Over 1 to 7 the chain is Cytoplasmic; it reads MSFRKVN. Residues 8–28 form a helical; Signal-anchor for type II membrane protein membrane-spanning segment; sequence IIILVLAVALFLLVLHHNFLS. Residues 29 to 371 lie on the Lumenal side of the membrane; the sequence is LSSLLRNEVT…RRYTEISNIK (343 aa). N-linked (GlcNAc...) asparagine glycans are attached at residues asparagine 249 and asparagine 257.

The protein belongs to the glycosyltransferase 8 family.

It is found in the membrane. This is Glycosyltransferase 8 domain-containing protein 1 (GLT8D1) from Homo sapiens (Human).